Here is a 440-residue protein sequence, read N- to C-terminus: DNA dC-&gt;dU-editing enzyme APOBEC-3 (440 aa).

CMP/dCMP-type deaminase domains lie at 49–165 (GRKD…AQVA) and 249–368 (EEEF…LCSL). His-82 is a binding site for Zn(2+). Glu-84 functions as the Proton donor in the catalytic mechanism. 5 residues coordinate Zn(2+): Cys-116, Cys-119, His-299, Cys-327, and Cys-330.

It belongs to the cytidine and deoxycytidylate deaminase family. As to quaternary structure, homodimer. Interacts with mouse mammary tumor virus (MMTV) nucleocapsid protein p14. Requires Zn(2+) as cofactor. As to expression, expressed in spleen, node and lung.

The protein resides in the cytoplasm. It catalyses the reaction a 2'-deoxycytidine in single-stranded DNA + H2O + H(+) = a 2'-deoxyuridine in single-stranded DNA + NH4(+). Functionally, DNA deaminase (cytidine deaminase) which acts as an inhibitor of retrovirus replication and retrotransposon mobility via deaminase-dependent and -independent mechanisms. Selectively targets single-stranded DNA and does not deaminate double-stranded DNA or single- or double-stranded RNA. Exhibits antiviral activity against HIV-1, simian immunodeficiency viruses (SIVs), mouse mammary tumor virus (MMTV) and friend murine leukemia virus (FrMLV) and may inhibit the mobility of LTR retrotransposons. The polypeptide is DNA dC-&gt;dU-editing enzyme APOBEC-3 (Apobec3) (Mus musculus (Mouse)).